A 363-amino-acid polypeptide reads, in one-letter code: Cytoplasmic envelopment protein 2 (363 aa).

Belongs to the herpesviridae cytoplasmic envelopment protein 2 family. Interacts with cytoplasmic envelopment protein 3 and with the capsid.

It is found in the virion tegument. It localises to the host cytoplasm. The protein resides in the host nucleus. Plays a critical role in cytoplasmic virus egress. Participates in the final step of tegumentation and envelope acquisition within the host cytoplasm by directly interacting with the capsid. Upon virion binding to target cell, a signaling cascade is triggered to disrupt the interaction with the capsid, thereby preparing capsid uncoating. In Varicella-zoster virus (strain Dumas) (HHV-3), this protein is Cytoplasmic envelopment protein 2 (44).